Consider the following 162-residue polypeptide: MNTKFPITAKGFKKLEHELKHLKHVERKKISEDIAEAREHGDLSENAEYEAAREKQAFIEGRIKELEDMTARAEIIDICKLSGDNIKFGATVTLIDDDTEEEVTYIIVGEYEADITKKRVSIASPIAKALIGKSVGDFVEVTTPKGLKSYEVVTVEYKELDL.

Residues 45–74 (ENAEYEAAREKQAFIEGRIKELEDMTARAE) adopt a coiled-coil conformation.

It belongs to the GreA/GreB family.

Functionally, necessary for efficient RNA polymerase transcription elongation past template-encoded arresting sites. The arresting sites in DNA have the property of trapping a certain fraction of elongating RNA polymerases that pass through, resulting in locked ternary complexes. Cleavage of the nascent transcript by cleavage factors such as GreA or GreB allows the resumption of elongation from the new 3'terminus. GreA releases sequences of 2 to 3 nucleotides. This is Transcription elongation factor GreA from Rickettsia prowazekii (strain Madrid E).